The following is a 244-amino-acid chain: 7-cyano-7-deazaguanine synthase (244 aa).

ATP is bound at residue 14–24 (FSGGQDSATCV). Residues Cys202, Cys217, Cys220, and Cys223 each contribute to the Zn(2+) site.

It belongs to the QueC family. Requires Zn(2+) as cofactor.

The enzyme catalyses 7-carboxy-7-deazaguanine + NH4(+) + ATP = 7-cyano-7-deazaguanine + ADP + phosphate + H2O + H(+). Its pathway is purine metabolism; 7-cyano-7-deazaguanine biosynthesis. Functionally, catalyzes the ATP-dependent conversion of 7-carboxy-7-deazaguanine (CDG) to 7-cyano-7-deazaguanine (preQ(0)). The sequence is that of 7-cyano-7-deazaguanine synthase from Burkholderia multivorans (strain ATCC 17616 / 249).